A 1535-amino-acid polypeptide reads, in one-letter code: CLIP-associating protein 1 (1535 aa).

HEAT repeat units follow at residues 87 to 124 (AQIGTVLPSLIDRLGDAKDSVREQDQTLLLKIMDQAAN) and 163 to 200 (LTLSKIVPHICNLLGDPNSQVRDAAINSLVEIYRHVGE). Residues 237–290 (NEKNFDDEDSVDGNRPSSASSSSSKAPSSSRRNVNLGTTRRLMSSSLGSKSSAA) form a disordered region. Residue S246 is modified to Phosphoserine. The span at 252–266 (PSSASSSSSKAPSSS) shows a compositional bias: low complexity. Over residues 267–279 (RRNVNLGTTRRLM) the composition is skewed to polar residues. A compositionally biased stretch (low complexity) spans 280 to 290 (SSSLGSKSSAA). HEAT repeat units lie at residues 405–440 (HGAEAIMPTIFNLIPNSAKIMATSGVVAVRLIIRHT) and 441–477 (HIPRLIPVITSNCTSKSVAVRRRCFEFLDLLLQEWQT). Disordered stretches follow at residues 543–600 (SDSI…RSRS) and 612–782 (SKVS…GRIP). S545, S548, S558, S559, and S568 each carry phosphoserine. Low complexity predominate over residues 548–567 (SLPQSDRSSSSSQESLNRPL). The segment covering 579–594 (SRGSTVSTKSVSTTGS) has biased composition (low complexity). At S600 the chain carries Phosphoserine. The segment covering 612 to 633 (SKVSSSSGSPAFSSAAALPPGS) has biased composition (low complexity). S636, S646, S647, and S649 each carry phosphoserine. Residues 645–658 (QSSGSTTNVASTPD) are compositionally biased toward polar residues. T656 is modified (phosphothreonine). The interval 662–782 (RSRAKVVSQS…FGLGQSGRIP (121 aa)) is interaction with microtubules, MAPRE1 and MAPRE3. Over residues 673-695 (RSRSANPAGAGSRSSSPGKLLGS) the composition is skewed to low complexity. A phosphoserine mark is found at S684, S688, S695, and S702. T708 bears the Phosphothreonine mark. S711 is modified (phosphoserine). A compositionally biased stretch (polar residues) spans 721–730 (QGCSRETSPN). Phosphoserine is present on residues S784, S794, and S820. Residues 971-1008 (QQFNILMRFIVDQTQTPNLKVKVAILKYIESLARQMDP) form an HEAT 5 repeat. Residues 1078–1157 (LKNSSNTGVG…APSHKTLRRS (80 aa)) form a disordered region. Polar residues predominate over residues 1079–1094 (KNSSNTGVGSPSNTIG). The residue at position 1088 (S1088) is a Phosphoserine. Residues T1092 and T1096 each carry the phosphothreonine modification. The segment covering 1103–1112 (SRTSPLTSPT) has biased composition (low complexity). Phosphoserine is present on residues S1110, F1139, and S1193. Basic and acidic residues predominate over residues 1200–1213 (PIKRDGKKDCDIVS). 2 disordered regions span residues 1200–1233 (PIKRDGKKDCDIVSRDGGAASPATEGRGGSEIEG) and 1245–1266 (LNTQPPRAFPGPRAREYNPYPY). Phosphoserine is present on S1220. The interaction with CLIP2 and RSN stretch occupies residues 1251-1535 (RAFPGPRARE…SSSSDVSTHS (285 aa)). Positions 1251-1535 (RAFPGPRARE…SSSSDVSTHS (285 aa)) are interaction with PHLDB2. Positions 1253–1535 (FPGPRAREYN…SSSSDVSTHS (283 aa)) are localization to kinetochores. A coiled-coil region spans residues 1296-1327 (DHSDLVADLLKELSNHNERVEERKGALLELLK). HEAT repeat units lie at residues 1339–1376 (EHFKTILLLLLETLGDKDHSIRALALRVLREILRNQPA) and 1457–1494 (QLLVDIIPGLLQGYDNTESSVRKASVFCLVAIYSVIGE).

It belongs to the CLASP family. In terms of assembly, interacts with ERC1, MAPRE1, MAPRE3, microtubules, and PHLDB2. The interaction with ERC1 may be mediated by PHLDB2. Interacts with GCC2; recruits CLASP1 to Golgi membranes. Interacts with CLIP2 and RSN. Interacts with MACF1. Interacts with mtcl2 and MTCL1. In terms of tissue distribution, highly expressed in brain and heart and at lower levels in kidney, lung, skeletal muscle and testis.

It is found in the cytoplasm. Its subcellular location is the cytoskeleton. The protein localises to the microtubule organizing center. The protein resides in the centrosome. It localises to the chromosome. It is found in the centromere. Its subcellular location is the kinetochore. The protein localises to the spindle. The protein resides in the golgi apparatus. It localises to the trans-Golgi network. In terms of biological role, microtubule plus-end tracking protein that promotes the stabilization of dynamic microtubules. Involved in the nucleation of noncentrosomal microtubules originating from the trans-Golgi network (TGN). Required for the polarization of the cytoplasmic microtubule arrays in migrating cells towards the leading edge of the cell. May act at the cell cortex to enhance the frequency of rescue of depolymerizing microtubules by attaching their plus-ends to cortical platforms composed of ERC1 and PHLDB2. This cortical microtubule stabilizing activity is regulated at least in part by phosphatidylinositol 3-kinase signaling. Also performs a similar stabilizing function at the kinetochore which is essential for the bipolar alignment of chromosomes on the mitotic spindle. This chain is CLIP-associating protein 1 (Clasp1), found in Mus musculus (Mouse).